We begin with the raw amino-acid sequence, 350 residues long: Probable lactoylglutathione lyase, chloroplastic (350 aa).

The N-terminal 61 residues, 1–61 (MVRIIPMAAS…KLLRRSVNCL (61 aa)), are a transit peptide targeting the chloroplast. VOC domains follow at residues 88-212 (RMLH…LLER) and 218-342 (PLCQ…FVDN). H91 is a Zn(2+) binding site. R95 contributes to the substrate binding site. E142 is a Zn(2+) binding site. 2 residues coordinate substrate: N146 and H160. Zn(2+)-binding residues include H160 and E208. Catalysis depends on E208, which acts as the Proton donor/acceptor.

Belongs to the glyoxalase I family. The cofactor is Zn(2+).

It is found in the plastid. Its subcellular location is the chloroplast stroma. It catalyses the reaction (R)-S-lactoylglutathione = methylglyoxal + glutathione. It participates in secondary metabolite metabolism; methylglyoxal degradation; (R)-lactate from methylglyoxal: step 1/2. Its function is as follows. Catalyzes the conversion of hemimercaptal, formed from methylglyoxal and glutathione, to S-lactoylglutathione. The sequence is that of Probable lactoylglutathione lyase, chloroplastic from Arabidopsis thaliana (Mouse-ear cress).